A 424-amino-acid chain; its full sequence is Histidine--tRNA ligase (424 aa).

This sequence belongs to the class-II aminoacyl-tRNA synthetase family. In terms of assembly, homodimer.

It is found in the cytoplasm. It catalyses the reaction tRNA(His) + L-histidine + ATP = L-histidyl-tRNA(His) + AMP + diphosphate + H(+). The sequence is that of Histidine--tRNA ligase from Shewanella halifaxensis (strain HAW-EB4).